A 321-amino-acid polypeptide reads, in one-letter code: Isopenicillin N synthase (321 aa).

The disordered stretch occupies residues 1 to 42 (MPVLMPSADVPTIDISPQLFGTDPTPRRTSRGRSTRPARGSG). R87, Y91, and Y188 together coordinate isopenicillin N. 5 residues coordinate N-[(5S)-5-amino-5-carboxypentanoyl]-L-cysteinyl-D-valine: R87, Y91, Y188, H213, and D215. One can recognise a Fe2OG dioxygenase domain in the interval 179-287 (TLSAVSMIRY…RLSLPFFLHA (109 aa)). Residues H213, D215, and H269 each contribute to the Fe(2+) site. R278 contributes to the 2-oxoglutarate binding site. S280 contributes to the isopenicillin N binding site. S280 is a binding site for N-[(5S)-5-amino-5-carboxypentanoyl]-L-cysteinyl-D-valine.

It belongs to the iron/ascorbate-dependent oxidoreductase family. Requires Fe cation as cofactor. L-ascorbate is required as a cofactor.

It catalyses the reaction N-[(5S)-5-amino-5-carboxypentanoyl]-L-cysteinyl-D-valine + O2 = isopenicillin N + 2 H2O. The protein operates within antibiotic biosynthesis; penicillin G biosynthesis; penicillin G from L-alpha-aminoadipate and L-cysteine and L-valine: step 2/3. Functionally, removes, in the presence of oxygen, 4 hydrogen atoms from delta-L-(alpha-aminoadipyl)-L-cysteinyl-D-valine (ACV) to form the azetidinone and thiazolidine rings of isopenicillin. The polypeptide is Isopenicillin N synthase (pcbC) (Streptantibioticus cattleyicolor (Streptomyces cattleya)).